An 83-amino-acid chain; its full sequence is ATP synthase subunit c 2 (83 aa).

The next 2 membrane-spanning stretches (helical) occupy residues 8–28 (IASI…PALG) and 58–78 (LAMI…LLFA).

Belongs to the ATPase C chain family. In terms of assembly, F-type ATPases have 2 components, F(1) - the catalytic core - and F(0) - the membrane proton channel. F(1) has five subunits: alpha(3), beta(3), gamma(1), delta(1), epsilon(1). F(0) has four main subunits: a(1), b(1), b'(1) and c(10-14). The alpha and beta chains form an alternating ring which encloses part of the gamma chain. F(1) is attached to F(0) by a central stalk formed by the gamma and epsilon chains, while a peripheral stalk is formed by the delta, b and b' chains.

It localises to the cell inner membrane. Its function is as follows. F(1)F(0) ATP synthase produces ATP from ADP in the presence of a proton or sodium gradient. F-type ATPases consist of two structural domains, F(1) containing the extramembraneous catalytic core and F(0) containing the membrane proton channel, linked together by a central stalk and a peripheral stalk. During catalysis, ATP synthesis in the catalytic domain of F(1) is coupled via a rotary mechanism of the central stalk subunits to proton translocation. In terms of biological role, key component of the F(0) channel; it plays a direct role in translocation across the membrane. A homomeric c-ring of between 10-14 subunits forms the central stalk rotor element with the F(1) delta and epsilon subunits. The chain is ATP synthase subunit c 2 from Cereibacter sphaeroides (strain ATCC 17029 / ATH 2.4.9) (Rhodobacter sphaeroides).